Here is a 592-residue protein sequence, read N- to C-terminus: Endoribonuclease Arlr (592 aa).

The signal sequence occupies residues 1–24 (MRCLALSAVFLCLTLAGHFHLSDA). The interval 83–329 (PTAANKPPPL…FQSSGNSVAT (247 aa)) is disordered. Over residues 109-120 (PGSSPFGASQNP) the composition is skewed to polar residues. Composition is skewed to low complexity over residues 134 to 144 (PSHPSQPSQPS) and 188 to 209 (GISS…TGKT). Pro residues-rich tracts occupy residues 234-249 (LPAP…PTPG) and 258-267 (LPTPQHPVHP). Positions 268–294 (PTKATSAATPTPTPTPSFSSSVTPTPA) are enriched in low complexity. The 264-residue stretch at 329–592 (TDDEIRQLTE…NLIGSAYPEI (264 aa)) folds into the EndoU domain. Active-site residues include H473, H488, and K531.

The protein belongs to the ENDOU family. As to quaternary structure, monomer. The cofactor is Mn(2+). Predominantly expressed in head. Expressed in fat body cells.

The protein resides in the endoplasmic reticulum lumen. Its subcellular location is the secreted. The catalysed reaction is a ribonucleotidyl-ribonucleotide-RNA + H2O = a 3'-end 3'-phospho-ribonucleotide-RNA + a 5'-end dephospho-ribonucleoside-RNA + H(+). In terms of biological role, endoribonuclease that cleaves single-stranded RNAs; unlike its paralog EndoU it does not appear to preferentially cleave at uridylates and releases linear products instead of products that have 2'-3'-cyclic phosphate termini. Preferentially cleaves single stranded RNA at sites with AU, UC and poly-U sites cleaved less efficiently. Targets mRNAs encoding proteins involved in lipid metabolism, particularly those involved in lipolysis, to regulate their expression. This chain is Endoribonuclease Arlr, found in Drosophila melanogaster (Fruit fly).